Here is a 98-residue protein sequence, read N- to C-terminus: NADH-ubiquinone oxidoreductase chain 4L (98 aa).

Transmembrane regions (helical) follow at residues 2–22 (PSISINIILAFAAALLGMLMF), 28–48 (SSLLCLEGMMLSMFILSTLII), and 61–81 (IMLLVFSACEAAIGLALLVMV).

It belongs to the complex I subunit 4L family. In terms of assembly, core subunit of respiratory chain NADH dehydrogenase (Complex I) which is composed of 45 different subunits.

Its subcellular location is the mitochondrion inner membrane. It catalyses the reaction a ubiquinone + NADH + 5 H(+)(in) = a ubiquinol + NAD(+) + 4 H(+)(out). Functionally, core subunit of the mitochondrial membrane respiratory chain NADH dehydrogenase (Complex I) which catalyzes electron transfer from NADH through the respiratory chain, using ubiquinone as an electron acceptor. Part of the enzyme membrane arm which is embedded in the lipid bilayer and involved in proton translocation. The chain is NADH-ubiquinone oxidoreductase chain 4L (MT-ND4L) from Allocebus trichotis (Hairy-eared dwarf lemur).